The primary structure comprises 335 residues: Holliday junction branch migration complex subunit RuvB (335 aa).

The interval 1 to 181 is large ATPase domain (RuvB-L); it reads MDRIVEIEKY…FGMQFRLEFY (181 aa). ATP contacts are provided by residues L20, R21, G62, K65, T66, T67, 128–130, R171, Y181, and R218; that span reads EDY. T66 is a Mg(2+) binding site. Residues 182 to 252 form a small ATPAse domain (RuvB-S) region; that stretch reads KDSELALILQ…RANEALNSLG (71 aa). Residues 255–335 are head domain (RuvB-H); that stretch reads ELGFDAMDLR…LNYEKTLFEE (81 aa). R309 and R314 together coordinate DNA.

It belongs to the RuvB family. As to quaternary structure, homohexamer. Forms an RuvA(8)-RuvB(12)-Holliday junction (HJ) complex. HJ DNA is sandwiched between 2 RuvA tetramers; dsDNA enters through RuvA and exits via RuvB. An RuvB hexamer assembles on each DNA strand where it exits the tetramer. Each RuvB hexamer is contacted by two RuvA subunits (via domain III) on 2 adjacent RuvB subunits; this complex drives branch migration. In the full resolvosome a probable DNA-RuvA(4)-RuvB(12)-RuvC(2) complex forms which resolves the HJ.

The protein localises to the cytoplasm. The enzyme catalyses ATP + H2O = ADP + phosphate + H(+). The RuvA-RuvB-RuvC complex processes Holliday junction (HJ) DNA during genetic recombination and DNA repair, while the RuvA-RuvB complex plays an important role in the rescue of blocked DNA replication forks via replication fork reversal (RFR). RuvA specifically binds to HJ cruciform DNA, conferring on it an open structure. The RuvB hexamer acts as an ATP-dependent pump, pulling dsDNA into and through the RuvAB complex. RuvB forms 2 homohexamers on either side of HJ DNA bound by 1 or 2 RuvA tetramers; 4 subunits per hexamer contact DNA at a time. Coordinated motions by a converter formed by DNA-disengaged RuvB subunits stimulates ATP hydrolysis and nucleotide exchange. Immobilization of the converter enables RuvB to convert the ATP-contained energy into a lever motion, pulling 2 nucleotides of DNA out of the RuvA tetramer per ATP hydrolyzed, thus driving DNA branch migration. The RuvB motors rotate together with the DNA substrate, which together with the progressing nucleotide cycle form the mechanistic basis for DNA recombination by continuous HJ branch migration. Branch migration allows RuvC to scan DNA until it finds its consensus sequence, where it cleaves and resolves cruciform DNA. This Campylobacter jejuni (strain RM1221) protein is Holliday junction branch migration complex subunit RuvB.